The following is a 300-amino-acid chain: 33 kDa chaperonin (300 aa).

2 cysteine pairs are disulfide-bonded: C235–C237 and C269–C272.

It belongs to the HSP33 family. Post-translationally, under oxidizing conditions two disulfide bonds are formed involving the reactive cysteines. Under reducing conditions zinc is bound to the reactive cysteines and the protein is inactive.

Its subcellular location is the cytoplasm. In terms of biological role, redox regulated molecular chaperone. Protects both thermally unfolding and oxidatively damaged proteins from irreversible aggregation. Plays an important role in the bacterial defense system toward oxidative stress. The chain is 33 kDa chaperonin from Pseudomonas savastanoi pv. phaseolicola (strain 1448A / Race 6) (Pseudomonas syringae pv. phaseolicola (strain 1448A / Race 6)).